A 767-amino-acid chain; its full sequence is Probable beta-glucosidase K (767 aa).

N-linked (GlcNAc...) asparagine glycosylation is present at N19. Residue D232 is part of the active site. N324, N477, and N749 each carry an N-linked (GlcNAc...) asparagine glycan. The PA14 domain maps to 405–552 (EGQPGLRMRF…DPERAIARAV (148 aa)). Positions 727–767 (LGRRGRSGSSPAVYRGRSNNVVNRTSHQGAQRISKGGFAAR) are disordered. Residues 743-757 (RSNNVVNRTSHQGAQ) are compositionally biased toward polar residues.

Belongs to the glycosyl hydrolase 3 family.

It is found in the secreted. The catalysed reaction is Hydrolysis of terminal, non-reducing beta-D-glucosyl residues with release of beta-D-glucose.. It participates in glycan metabolism; cellulose degradation. Functionally, beta-glucosidases are one of a number of cellulolytic enzymes involved in the degradation of cellulosic biomass. Catalyzes the last step releasing glucose from the inhibitory cellobiose. This is Probable beta-glucosidase K (bglK) from Aspergillus fumigatus (strain ATCC MYA-4609 / CBS 101355 / FGSC A1100 / Af293) (Neosartorya fumigata).